Here is a 493-residue protein sequence, read N- to C-terminus: Probable mannosyl-oligosaccharide alpha-1,2-mannosidase 1B (493 aa).

The signal sequence occupies residues 1-18 (MHLPSLSVALALVSSSLA). Residues N87 and N174 are each glycosylated (N-linked (GlcNAc...) asparagine). A disulfide bridge links C324 with C353. The active-site Proton donor is E367. A glycan (N-linked (GlcNAc...) asparagine) is linked at N489.

The protein belongs to the glycosyl hydrolase 47 family. Monomer. The cofactor is Ca(2+). Mg(2+) is required as a cofactor.

It is found in the cytoplasmic vesicle lumen. It catalyses the reaction N(4)-(alpha-D-Man-(1-&gt;2)-alpha-D-Man-(1-&gt;2)-alpha-D-Man-(1-&gt;3)-[alpha-D-Man-(1-&gt;2)-alpha-D-Man-(1-&gt;3)-[alpha-D-Man-(1-&gt;2)-alpha-D-Man-(1-&gt;6)]-alpha-D-Man-(1-&gt;6)]-beta-D-Man-(1-&gt;4)-beta-D-GlcNAc-(1-&gt;4)-beta-D-GlcNAc)-L-asparaginyl-[protein] (N-glucan mannose isomer 9A1,2,3B1,2,3) + 4 H2O = N(4)-(alpha-D-Man-(1-&gt;3)-[alpha-D-Man-(1-&gt;3)-[alpha-D-Man-(1-&gt;6)]-alpha-D-Man-(1-&gt;6)]-beta-D-Man-(1-&gt;4)-beta-D-GlcNAc-(1-&gt;4)-beta-D-GlcNAc)-L-asparaginyl-[protein] (N-glucan mannose isomer 5A1,2) + 4 beta-D-mannose. The enzyme catalyses N(4)-(alpha-D-Man-(1-&gt;2)-alpha-D-Man-(1-&gt;2)-alpha-D-Man-(1-&gt;3)-[alpha-D-Man-(1-&gt;3)-[alpha-D-Man-(1-&gt;2)-alpha-D-Man-(1-&gt;6)]-alpha-D-Man-(1-&gt;6)]-beta-D-Man-(1-&gt;4)-beta-D-GlcNAc-(1-&gt;4)-beta-D-GlcNAc)-L-asparaginyl-[protein] (N-glucan mannose isomer 8A1,2,3B1,3) + 3 H2O = N(4)-(alpha-D-Man-(1-&gt;3)-[alpha-D-Man-(1-&gt;3)-[alpha-D-Man-(1-&gt;6)]-alpha-D-Man-(1-&gt;6)]-beta-D-Man-(1-&gt;4)-beta-D-GlcNAc-(1-&gt;4)-beta-D-GlcNAc)-L-asparaginyl-[protein] (N-glucan mannose isomer 5A1,2) + 3 beta-D-mannose. Its pathway is protein modification; protein glycosylation. Involved in the maturation of Asn-linked oligosaccharides. Progressively trims alpha-1,2-linked mannose residues from Man(9)GlcNAc(2) to produce Man(5)GlcNAc(2). The chain is Probable mannosyl-oligosaccharide alpha-1,2-mannosidase 1B (mns1B) from Neosartorya fischeri (strain ATCC 1020 / DSM 3700 / CBS 544.65 / FGSC A1164 / JCM 1740 / NRRL 181 / WB 181) (Aspergillus fischerianus).